We begin with the raw amino-acid sequence, 206 residues long: Large ribosomal subunit protein uL4 (206 aa).

Residues 48–75 (TQSAKTRAEVSGGGIKPWRQKGTGRARQ) are disordered.

This sequence belongs to the universal ribosomal protein uL4 family. In terms of assembly, part of the 50S ribosomal subunit.

One of the primary rRNA binding proteins, this protein initially binds near the 5'-end of the 23S rRNA. It is important during the early stages of 50S assembly. It makes multiple contacts with different domains of the 23S rRNA in the assembled 50S subunit and ribosome. In terms of biological role, forms part of the polypeptide exit tunnel. The sequence is that of Large ribosomal subunit protein uL4 from Clostridium botulinum (strain Loch Maree / Type A3).